The chain runs to 569 residues: GATOR1 complex protein NPRL3 (569 aa).

Disordered regions lie at residues 27 to 60 and 441 to 476; these read PFQR…DQDG and TPNA…SGDS. 2 stretches are compositionally biased toward polar residues: residues 34–52 and 441–468; these read HPAS…NNTG and TPNA…NSSA. Serine 476 is subject to Phosphoserine.

Belongs to the NPR3 family. Within the GATOR complex, component of the GATOR1 subcomplex, made of DEPDC5, NPRL2 and NPRL3. GATOR1 mediates the strong interaction of the GATOR complex with small GTPases Rag (RagA/RRAGA, RagB/RRAGB, RagC/RRAGC and/or RagD/RRAGD) heterodimers. GATOR1 interacts with GPR155/LYCHOS; interaction takes place in presence of cholesterol and prevents interaction between GATOR1 and KICSTOR.

The protein resides in the lysosome membrane. Functionally, as a component of the GATOR1 complex functions as an inhibitor of the amino acid-sensing branch of the mTORC1 pathway. In response to amino acid depletion, the GATOR1 complex has GTPase activating protein (GAP) activity and strongly increases GTP hydrolysis by RagA/RRAGA (or RagB/RRAGB) within heterodimeric Rag complexes, thereby turning them into their inactive GDP-bound form, releasing mTORC1 from lysosomal surface and inhibiting mTORC1 signaling. In the presence of abundant amino acids, the GATOR1 complex is negatively regulated by GATOR2, the other GATOR subcomplex, in this amino acid-sensing branch of the TORC1 pathway. This chain is GATOR1 complex protein NPRL3, found in Mus musculus (Mouse).